The chain runs to 252 residues: uncharacterized protein (252 aa).

Positions 1-25 are cleaved as a signal peptide; the sequence is MRKKKFLSRFAFGSLFLLCGTILSA. C26 is lipidated: N-palmitoyl cysteine. The S-diacylglycerol cysteine moiety is linked to residue C26.

It belongs to the MG439/MG440 family.

The protein localises to the cell membrane. This is an uncharacterized protein from Mycoplasma pneumoniae (strain ATCC 29342 / M129 / Subtype 1) (Mycoplasmoides pneumoniae).